A 237-amino-acid polypeptide reads, in one-letter code: Octopine transport system permease protein OccQ (237 aa).

One can recognise an ABC transmembrane type-1 domain in the interval 22 to 222; that stretch reads TAMTMAVAFS…LITFVSGQVF (201 aa). Transmembrane regions (helical) follow at residues 26-46, 72-92, 96-116, and 202-222; these read MAVA…GAAA, LVIY…ASLF, GFVG…VSGA, and SFYL…GQVF.

This sequence belongs to the binding-protein-dependent transport system permease family. HisMQ subfamily.

It is found in the cell inner membrane. Component of the octopine active transport system probably consisting of four subunits: Q, M, P and T. This is Octopine transport system permease protein OccQ (occQ) from Agrobacterium tumefaciens (strain Ach5).